The sequence spans 341 residues: Glyceraldehyde-3-phosphate dehydrogenase, cytosolic (341 aa).

Residues 14-15 and aspartate 36 contribute to the NAD(+) site; that span reads RI. D-glyceraldehyde 3-phosphate contacts are provided by residues 153-155, threonine 184, 213-214, and arginine 236; these read SCT and TG. The Nucleophile role is filled by cysteine 154. Position 318 (asparagine 318) interacts with NAD(+).

The protein belongs to the glyceraldehyde-3-phosphate dehydrogenase family. As to quaternary structure, homotetramer.

It is found in the cytoplasm. The catalysed reaction is D-glyceraldehyde 3-phosphate + phosphate + NAD(+) = (2R)-3-phospho-glyceroyl phosphate + NADH + H(+). It participates in carbohydrate degradation; glycolysis; pyruvate from D-glyceraldehyde 3-phosphate: step 1/5. Its function is as follows. Key enzyme in glycolysis that catalyzes the first step of the pathway by converting D-glyceraldehyde 3-phosphate (G3P) into 3-phospho-D-glyceroyl phosphate. Essential for the maintenance of cellular ATP levels and carbohydrate metabolism. This Chlamydomonas reinhardtii (Chlamydomonas smithii) protein is Glyceraldehyde-3-phosphate dehydrogenase, cytosolic (GAPC).